We begin with the raw amino-acid sequence, 325 residues long: tRNA N6-adenosine threonylcarbamoyltransferase (325 aa).

The Fe cation site is built by His110 and His114. Substrate is bound by residues 133 to 137 (MVSGG), Asp165, Gly178, and Asn268. Residue Asp296 coordinates Fe cation.

It belongs to the KAE1 / TsaD family. The cofactor is Fe(2+).

The protein resides in the cytoplasm. The catalysed reaction is L-threonylcarbamoyladenylate + adenosine(37) in tRNA = N(6)-L-threonylcarbamoyladenosine(37) in tRNA + AMP + H(+). Required for the formation of a threonylcarbamoyl group on adenosine at position 37 (t(6)A37) in tRNAs that read codons beginning with adenine. Is involved in the transfer of the threonylcarbamoyl moiety of threonylcarbamoyl-AMP (TC-AMP) to the N6 group of A37, together with TsaE and TsaB. TsaD likely plays a direct catalytic role in this reaction. This Thermosipho melanesiensis (strain DSM 12029 / CIP 104789 / BI429) protein is tRNA N6-adenosine threonylcarbamoyltransferase.